The following is a 1254-amino-acid chain: MEDGKPVWAPHPTDGFQVGNIVDIGPDSLTIEPLNQKGKTFLALINQVFPAEEDSKKDVEDNCSLMYLNEATLLHNIKVRYSKDRIYTYVANILIAVNPYFDIPKIYSSETIKSYQGKSLGTMPPHVFAIADKAFRDMKVLKLSQSIIVSGESGAGKTENTKFVLRYLTESYGTGQDIDDRIVEANPLLEAFGNAKTVRNNNSSRFGKFVEIHFNEKSSVVGGFVSHYLLEKSRICVQGKEERNYHIFYRLCAGASEDIRERLHLSSPDNFRYLNRGCTRYFANKETDKQILQNRKSPEYLKAGSLKDPLLDDHGDFIRMCTAMKKIGLDDEEKLDLFRVVAGVLHLGNIDFEEAGSTSGGCNLKNKSTQALEYCAEKLLGLDQDDLRVSLTTRVMLTTAGGAKGTVIKVPLKVEQANNARDALAKTVYSHLFDHVVNRVNQCFPFETSSYFIGVLDIAGFEYFEHNSFEQFCINYCNEKLQQFFNERILKEEQELYQKEGLGVNEVHYVDNQDCIDLIEARLVGILDILDEENRLPQPSDQHFTSAGHQKHKDHFRLSIPRKSKLAIHRNIAYDEGFIIRHFAGAVCYETTQFVEKNNDALHMSLESLICESRDKFIRELFESSTNNNKDTKQKAGKLSFISVGNKFKTQLNLLLDKLRSTGASFIRCIKPNLKMTSHHFEGAQILSQLQCSGMVSVLDLMQGGFPSRASFHEVYNMYKKSLPDKLARLDPRLFCKALFKALGLNEIDYKFGLTKVFFRPGKFAEFDQIMKSDPDHLAELVKRVNHWLICSRWKKVQWCSLSVIKLKNKIKYRAEACIKMQKTIRMWLCKRRHKPRIDGLVKVGTLKKRLDKFNEVVSALKDGKQEMSKQVKDLEISIDALMAKIKSTMMTREQIQKEYDALVKSSAVLLSALQKKKQQEEEAERLRRIQEEMEKERKRREEDEQRRRKEEEERRMKLEMEAKRKQEEEERKKREDDEKRIQAEVEAQLARQREEESQQQAVLEQERRDRELALRIAQSEAELISDEAQADPGLRRGPAVQATKAAAGTKKYDLSKWKYAELRDTINTSCDIELLAACREEFHRRLKVYHAWKSKNKKRNTETEQRAPKSVTDYAQQNPAVQLPARQQEIEMNRQQRFFRIPFIRSADQYKDPQNKKKGWWYAHFDGPWIARQMELHPDKPPILLVAGKDDMEMCELNLEETGLTRKRGAEILPRQFEEIWERCGGIQYLQNAIESRQARPTYATAMLQNLLK.

In terms of domain architecture, Myosin N-terminal SH3-like spans 2–53 (EDGKPVWAPHPTDGFQVGNIVDIGPDSLTIEPLNQKGKTFLALINQVFPAEE). In terms of domain architecture, Myosin motor spans 57-772 (KDVEDNCSLM…KFAEFDQIMK (716 aa)). Residue 151-158 (GESGAGKT) coordinates ATP. Residue S267 is modified to Phosphoserine. The segment at 273–317 (YLNRGCTRYFANKETDKQILQNRKSPEYLKAGSLKDPLLDDHGDF) is responsible for slow ATPase activity. T406 bears the Phosphothreonine mark. S605 is modified (phosphoserine). The segment at 666 to 673 (FIRCIKPN) is actin-binding. Residues 783 to 811 (KRVNHWLICSRWKKVQWCSLSVIKLKNKI) form a required for binding calmodulin region. Residues 814 to 843 (RAEACIKMQKTIRMWLCKRRHKPRIDGLVK) form the IQ domain. Residues 836-917 (PRIDGLVKVG…AVLLSALQKK (82 aa)) form a three-helix bundle region. The segment at 918–985 (KQQEEEAERL…EDDEKRIQAE (68 aa)) is SAH. Positions 935-956 (EKERKRREEDEQRRRKEEEERR) are disordered. S1026 carries the post-translational modification Phosphoserine. Residues 1037 to 1245 (RGPAVQATKA…ESRQARPTYA (209 aa)) are interaction with TAX1BP1 and CALCOCO2/NDP52. An interaction with OPTN region spans residues 1085–1087 (RRL). The segment at 1096-1117 (KNKKRNTETEQRAPKSVTDYAQ) is disordered. The interval 1117-1245 (QQNPAVQLPA…ESRQARPTYA (129 aa)) is interaction with TOM1.

Belongs to the TRAFAC class myosin-kinesin ATPase superfamily. Myosin family. In terms of assembly, homodimer; dimerization seems to implicate the unfolding of the three-helix bundle region creating an additional calmodulin binding site, and cargo binding. Component of the DISP/DOCK7-induced septin displacement complex, at least composed of DOCK7, LRCH3 and MYO6. Able to function as a monomer under specific conditions in vitro. Forms a complex with CFTR and DAB2 in the apical membrane of epithelial cells. Binding to calmodulin through a unique insert, not found in other myosins, located in the neck region between the motor domain and the IQ domain appears to contribute to the directionality reversal. This interaction occurs only if the C-terminal lobe of calmodulin is occupied by calcium. Interaction with F-actin/ACTN1 occurs only at the apical brush border domain of the proximal tubule cells. Interacts with DAB2. In vitro, the C-terminal globular tail binds a C-terminal region of DAB2. Interacts with CFTR. Interacts with CABP5. Interacts (via residues 1117-1245) with TOM1 (via residues 392-463). Interacts (via residues 1060-1285) with OPTN. Interacts (via residues 1060-1285) with TAX1BP1 and CALCOCO2/NDP52. Interacts with TOM1L2. Interacts with CLIC5; may work together in a complex which also includes RDX and MYO6 to stabilize linkages between the plasma membrane and subjacent actin cytoskeleton at the base of stereocilia. In terms of processing, phosphorylation in the motor domain, induced by EGF, results in translocation of MYO6 from the cell surface to membrane ruffles and affects F-actin dynamics. Phosphorylated in vitro by p21-activated kinase (PAK). In terms of tissue distribution, expressed in all tissues examined including kidney cortex, intestinal mucosa, liver, lung, heart, jowl muscle, brain cortex and medulla, and in the epithelial cell line, LLC-PK1 (at protein level). In the kidney, located to the brush border of adult kidney proximal tubule cells.

The protein resides in the golgi apparatus. The protein localises to the trans-Golgi network membrane. It localises to the nucleus. It is found in the cytoplasm. Its subcellular location is the perinuclear region. The protein resides in the membrane. The protein localises to the clathrin-coated pit. It localises to the cytoplasmic vesicle. It is found in the clathrin-coated vesicle. Its subcellular location is the cell projection. The protein resides in the filopodium. The protein localises to the ruffle membrane. It localises to the microvillus. It is found in the cytosol. Functionally, myosins are actin-based motor molecules with ATPase activity. Unconventional myosins serve in intracellular movements. Myosin 6 is a reverse-direction motor protein that moves towards the minus-end of actin filaments. Has slow rate of actin-activated ADP release due to weak ATP binding. Functions in a variety of intracellular processes such as vesicular membrane trafficking and cell migration. Required for the structural integrity of the Golgi apparatus via the p53-dependent pro-survival pathway. Appears to be involved in a very early step of clathrin-mediated endocytosis in polarized epithelial cells. Together with TOM1, mediates delivery of endocytic cargo to autophagosomes thereby promoting autophagosome maturation and driving fusion with lysosomes. Links TOM1 with autophagy receptors, such as TAX1BP1; CALCOCO2/NDP52 and OPTN. May act as a regulator of F-actin dynamics. As part of the DISP complex, may regulate the association of septins with actin and thereby regulate the actin cytoskeleton. May play a role in transporting DAB2 from the plasma membrane to specific cellular targets. May play a role in the extension and network organization of neurites. Required for structural integrity of inner ear hair cells. Required for the correct localization of CLIC5 and RDX at the stereocilium base. Modulates RNA polymerase II-dependent transcription. This is Unconventional myosin-VI (MYO6) from Sus scrofa (Pig).